A 322-amino-acid polypeptide reads, in one-letter code: Nodulation protein D 1 (322 aa).

The region spanning 6–63 (LDLNLLVALDALMTERKLTAAARSINLSQPAMSAAITRLRTYFRDELFTMNGRELVPT) is the HTH lysR-type domain. Residues 23-42 (LTAAARSINLSQPAMSAAIT) constitute a DNA-binding region (H-T-H motif).

Belongs to the LysR transcriptional regulatory family.

In terms of biological role, regulates the expression of the nod abcFE genes which encode other nodulation proteins. NodD is also a negative regulator of its own expression. Binds flavonoids as inducers. In Sinorhizobium fredii (strain NBRC 101917 / NGR234), this protein is Nodulation protein D 1 (nodD1).